Consider the following 398-residue polypeptide: Phosphoglycerate kinase (398 aa).

Substrate is bound by residues 21–23 (DFN), Arg-36, 59–62 (HLGR), Arg-119, and Arg-157. ATP contacts are provided by residues Lys-208, Gly-296, Glu-327, and 354–357 (GGDS).

The protein belongs to the phosphoglycerate kinase family. Monomer.

The protein resides in the cytoplasm. It catalyses the reaction (2R)-3-phosphoglycerate + ATP = (2R)-3-phospho-glyceroyl phosphate + ADP. Its pathway is carbohydrate degradation; glycolysis; pyruvate from D-glyceraldehyde 3-phosphate: step 2/5. This Streptococcus equi subsp. equi (strain 4047) protein is Phosphoglycerate kinase.